We begin with the raw amino-acid sequence, 521 residues long: MLPTLPNIAGRINTMATFLLPVAIGTIILLFLYGKYVTSTLIPGPPTLPLIGNLHQLPSDDRRHVLAQWHKKHGPIISLKFGWSSVVILGNIAVTKELFGKRSLKYGSRPRMVMARDCMTKQMQTSTLPWGEKWKIHNRIQLSLVGGPKIRSYQSLLDIESCKVLYQLLSTESLVTCFNRFKFNIIYTLAYGKDPDQNESDFHEILELADHFTQTLTNATWVVDLFPILNCLPRRLAPWKAVGDDFHRRAMGWFRRNSEAAVKSNSWNWTKHVQFNEDTGNLSVSEMQYLIGVLFEAGVDSTATVLHFFVLACTLYPDAVTKARQELDKVVGSARLPTPKDLPQLPYVKAFIQEVLRWRPITAEGLPHFTLEDDKYQGYDIPKGSTVIFNYWSGHMDEDTYQHADQFCPERWIERPDLPLGVFGYGRRACAGRRLALMSLETLIPKLLWAFDFRSPAGTDHGKSRDPGTEHQGALIKPRSFPVSWHPVSNDRRLIIERLFQERDKDLDTVLDDIGKAFERY.

Residues 14 to 34 (TMATFLLPVAIGTIILLFLYG) form a helical membrane-spanning segment. N-linked (GlcNAc...) asparagine glycans are attached at residues Asn198, Asn218, Asn268, and Asn281. A heme-binding site is contributed by Cys430.

It belongs to the cytochrome P450 family. Heme serves as cofactor.

Its subcellular location is the membrane. It functions in the pathway secondary metabolite biosynthesis; terpenoid biosynthesis. In terms of biological role, cytochrome P450 monooxygenase; part of the gene cluster that mediates the biosynthesis of astellolides, drimane-type sesquiterpene esters that show antimicrobial, anti-inflammatory, and anti-tumor activities. The first step in astellolide biosynthesis is performed by the sesquiterpene cyclase astC that catalyzes the formation of drimanyl pyrophosphate from farnesyl pyrophosphate. Drimanyl pyrophosphate is then dephosphorylated by the sesquiterpene phosphatase astI to produce drimanyl monophosphate which is further dephosphorylated to drim-8-ene-11-ol by atsK. Drim-8-ene-11-ol is converted to confertifolin, probably by the cytochrome P450 monooxygenase astD and/or the dehydrogenase astE. The cytochrome P450 monooxygenases astB, astF and astJ then hydroxylate confertifolin at C6, C14, or C15 to form trihydroxy confertifolin. The nonribosomal peptide synthetase astA catalyzes ester bond formation between trihydroxy contifolin and benzoic acid (BA) or 4-hydroxy benzoic acid (4HBA), leading to the formation of dideacetyl astellolides A and B, respectively. Finally, the O-acetyltransferase astG converts dideacetyl astellolides A and B into deacetyl astellolides A and B. This chain is Cytochrome P450 monooxygenase astF, found in Aspergillus oryzae (strain ATCC 42149 / RIB 40) (Yellow koji mold).